A 327-amino-acid polypeptide reads, in one-letter code: Malate dehydrogenase (327 aa).

12-18 serves as a coordination point for NAD(+); it reads GAAGQIG. 2 residues coordinate substrate: arginine 93 and arginine 99. NAD(+)-binding positions include asparagine 106, glutamine 113, and 130–132; that span reads VGN. Residues asparagine 132 and arginine 163 each coordinate substrate. The active-site Proton acceptor is histidine 188.

This sequence belongs to the LDH/MDH superfamily. MDH type 2 family.

The catalysed reaction is (S)-malate + NAD(+) = oxaloacetate + NADH + H(+). In terms of biological role, catalyzes the reversible oxidation of malate to oxaloacetate. The protein is Malate dehydrogenase of Cupriavidus metallidurans (strain ATCC 43123 / DSM 2839 / NBRC 102507 / CH34) (Ralstonia metallidurans).